A 1083-amino-acid chain; its full sequence is Kinesin-like protein klp-19 (1083 aa).

The region spanning 6–328 is the Kinesin motor domain; the sequence is SLRVVVRARP…LRYADRAKQI (323 aa). 85–92 lines the ATP pocket; sequence GQTGSGKT. A coiled-coil region spans residues 408 to 435; it reads MSALTQKNSRLEEDKAKLQSMLTDVRNT. Over residues 458 to 471 the composition is skewed to acidic residues; sequence TEESTTLADDDNDE. The tract at residues 458–479 is disordered; that stretch reads TEESTTLADDDNDETALGGQDD. Residues 487–650 are a coiled coil; that stretch reads LPELQAELDD…KSKLQKREND (164 aa). A compositionally biased stretch (polar residues) spans 1044–1055; it reads DDSQPSPSNSTF. A disordered region spans residues 1044-1083; sequence DDSQPSPSNSTFVIGAAPTSEADGVPPIKRKSRRTDLGPL.

The protein belongs to the TRAFAC class myosin-kinesin ATPase superfamily. Kinesin family. As to expression, expressed in the gonad.

It is found in the nucleus. It localises to the nucleoplasm. The protein localises to the cytoplasm. The protein resides in the cytoskeleton. Its subcellular location is the spindle. It is found in the chromosome. Its function is as follows. Required for chromosome movement and orientation on spindle poles in mitosis and meiosis. May play a role in early anterior-posterior chromosome movement in mitotic embryos. The polypeptide is Kinesin-like protein klp-19 (Caenorhabditis elegans).